Here is a 96-residue protein sequence, read N- to C-terminus: Putative pterin-4-alpha-carbinolamine dehydratase (96 aa).

This sequence belongs to the pterin-4-alpha-carbinolamine dehydratase family.

The enzyme catalyses (4aS,6R)-4a-hydroxy-L-erythro-5,6,7,8-tetrahydrobiopterin = (6R)-L-erythro-6,7-dihydrobiopterin + H2O. This Herpetosiphon aurantiacus (strain ATCC 23779 / DSM 785 / 114-95) protein is Putative pterin-4-alpha-carbinolamine dehydratase.